The sequence spans 345 residues: Diacylglycerol O-acyltransferase 1 (345 aa).

Over 1 to 49 the chain is Cytoplasmic; sequence MSEETSIPGIIASTPPISKDSRRNVSHWLQALAVFLHSVSLTLTASWYT. A helical membrane pass occupies residues 50–70; that stretch reads VLWAFLPFWPFLIVYLIWLIY. At 71 to 113 the chain is on the lumenal side; the sequence is DDGFVTGKDRQKRWLRNAPPYRWFCHYFPIRLHKTTELDSEKN. A helical transmembrane segment spans residues 114 to 134; it reads YIFGYHPHGIISLGAFGGFAS. Topologically, residues 135–141 are cytoplasmic; sequence EGADFSK. A helical transmembrane segment spans residues 142-162; that stretch reads LFPGINVSVLTLNSNFYVPVY. Topologically, residues 163 to 216 are lumenal; the sequence is RDYLMALNINSVSKKSCVSILSRKPGDSVLIVIGGAQESLLSRPGQNNLVLKKR. Residues 217–237 traverse the membrane as a helical segment; the sequence is FGFVKLAFLTGSSLVPCFAFG. Residues 238-345 are Cytoplasmic-facing; the sequence is ESDIFEQVDN…NRISELKLSA (108 aa).

Belongs to the diacylglycerol acyltransferase family.

It is found in the lipid droplet. The protein resides in the endoplasmic reticulum membrane. It carries out the reaction an acyl-CoA + a 1,2-diacyl-sn-glycerol = a triacyl-sn-glycerol + CoA. It catalyses the reaction a 2-acylglycerol + an acyl-CoA = a 1,2-diacyl-sn-glycerol + CoA. It participates in glycerolipid metabolism; triacylglycerol biosynthesis. Its function is as follows. Catalyzes the terminal and only committed step in triacylglycerol (TAG) synthesis by using diacylglycerol (DAG) and fatty acyl-CoA as substrates. Required for storage lipid synthesis. Major DAG esterifying enzyme in stationary phase when TAG production is particularly active. Involved in lipid particle synthesis from the endoplasmic reticulum, promoting localized TAG production at discrete ER subdomains. The polypeptide is Diacylglycerol O-acyltransferase 1 (dga1) (Schizosaccharomyces pombe (strain 972 / ATCC 24843) (Fission yeast)).